A 161-amino-acid chain; its full sequence is Mediator of RNA polymerase II transcription subunit 31 (161 aa).

The tract at residues 124–161 (GTGVDEQGAQDTQEGEGEQKQNKEEDAQDAQENTESKT) is disordered.

It belongs to the Mediator complex subunit 31 family. Component of the Mediator complex.

It localises to the nucleus. Component of the Mediator complex, a coactivator involved in the regulated transcription of nearly all RNA polymerase II-dependent genes. Mediator functions as a bridge to convey information from gene-specific regulatory proteins to the basal RNA polymerase II transcription machinery. Mediator is recruited to promoters by direct interactions with regulatory proteins and serves as a scaffold for the assembly of a functional preinitiation complex with RNA polymerase II and the general transcription factors. This Aspergillus clavatus (strain ATCC 1007 / CBS 513.65 / DSM 816 / NCTC 3887 / NRRL 1 / QM 1276 / 107) protein is Mediator of RNA polymerase II transcription subunit 31 (soh1).